We begin with the raw amino-acid sequence, 158 residues long: Phosphopantetheine adenylyltransferase (158 aa).

Substrate is bound at residue S9. ATP is bound by residues 9–10 and H17; that span reads SF. Substrate contacts are provided by K41, T73, and R87. Residues 88–90, E98, and 122–128 contribute to the ATP site; these read GLR and NQNISSS.

The protein belongs to the bacterial CoaD family. As to quaternary structure, homohexamer. It depends on Mg(2+) as a cofactor.

The protein localises to the cytoplasm. The enzyme catalyses (R)-4'-phosphopantetheine + ATP + H(+) = 3'-dephospho-CoA + diphosphate. The protein operates within cofactor biosynthesis; coenzyme A biosynthesis; CoA from (R)-pantothenate: step 4/5. In terms of biological role, reversibly transfers an adenylyl group from ATP to 4'-phosphopantetheine, yielding dephospho-CoA (dPCoA) and pyrophosphate. The chain is Phosphopantetheine adenylyltransferase from Leuconostoc citreum (strain KM20).